The following is an 874-amino-acid chain: Leucine--tRNA ligase (874 aa).

The short motif at 43–53 (PYPSGRIHIGH) is the 'HIGH' region element. The short motif at 630 to 634 (KMSKS) is the 'KMSKS' region element. K633 provides a ligand contact to ATP.

It belongs to the class-I aminoacyl-tRNA synthetase family.

It localises to the cytoplasm. It carries out the reaction tRNA(Leu) + L-leucine + ATP = L-leucyl-tRNA(Leu) + AMP + diphosphate. The chain is Leucine--tRNA ligase from Bradyrhizobium sp. (strain ORS 278).